The following is a 156-amino-acid chain: Transcription elongation factor GreA (156 aa).

Residues 1 to 32 (MKKVRLTREGYEKLKKELEDLKRKFMYEISER) adopt a coiled-coil conformation.

This sequence belongs to the GreA/GreB family.

Its function is as follows. Necessary for efficient RNA polymerase transcription elongation past template-encoded arresting sites. The arresting sites in DNA have the property of trapping a certain fraction of elongating RNA polymerases that pass through, resulting in locked ternary complexes. Cleavage of the nascent transcript by cleavage factors such as GreA or GreB allows the resumption of elongation from the new 3'terminus. GreA releases sequences of 2 to 3 nucleotides. This Thermotoga sp. (strain RQ2) protein is Transcription elongation factor GreA.